The following is a 151-amino-acid chain: Endoribonuclease YbeY (151 aa).

Positions 108, 112, and 118 each coordinate Zn(2+).

The protein belongs to the endoribonuclease YbeY family. Zn(2+) serves as cofactor.

It is found in the cytoplasm. Single strand-specific metallo-endoribonuclease involved in late-stage 70S ribosome quality control and in maturation of the 3' terminus of the 16S rRNA. This chain is Endoribonuclease YbeY, found in Porphyromonas gingivalis (strain ATCC 33277 / DSM 20709 / CIP 103683 / JCM 12257 / NCTC 11834 / 2561).